A 500-amino-acid polypeptide reads, in one-letter code: V-type proton ATPase subunit B (500 aa).

This sequence belongs to the ATPase alpha/beta chains family. In terms of assembly, V-ATPase is a heteromultimeric enzyme composed of a peripheral catalytic V1 complex (main components: subunits A, B, C, D, E, and F) attached to an integral membrane V0 proton pore complex (main component: the proteolipid protein).

In terms of biological role, non-catalytic subunit of the peripheral V1 complex of vacuolar ATPase. V-ATPase is responsible for acidifying a variety of intracellular compartments in eukaryotic cells. The polypeptide is V-type proton ATPase subunit B (Cyanidium caldarium (Red alga)).